The sequence spans 646 residues: FAD-binding monooxygenase prhK (646 aa).

N-linked (GlcNAc...) asparagine glycosylation occurs at asparagine 46. Residues 80-97 (IIIIGAGFGGLLFAVRLI) traverse the membrane as a helical segment. Residues 119–122 (TWYW), 131–132 (DT), and tyrosine 137 contribute to the FAD site. Residue 129–131 (MCD) participates in NADP(+) binding. NADP(+)-binding positions include 275–281 (TGATAIQ) and 298–299 (RT). Residues asparagine 429, asparagine 483, and asparagine 529 are each glycosylated (N-linked (GlcNAc...) asparagine).

The protein belongs to the FAD-binding monooxygenase family. Requires FAD as cofactor.

The protein resides in the membrane. It catalyses the reaction preaustinoid A + AH2 + O2 = preaustinoid A1 + A + H2O. The protein operates within secondary metabolite biosynthesis; terpenoid biosynthesis. FAD-binding monooxygenase; part of the gene cluster that mediates the biosynthesis of paraherquonin, a meroterpenoid with a unique, highly congested hexacyclic molecular architecture. The first step of the pathway is the synthesis of 3,5-dimethylorsellinic acid (DMOA) by the polyketide synthase prhL. Synthesis of DMOA is followed by farnesylation by the prenyltransferase prhE, methylesterification by the methyl-transferase prhM, epoxidation of the prenyl chain by the flavin-dependent monooxygenase prhF, and cyclization of the farnesyl moiety by the terpene cyclase prhH, to yield the tetracyclic intermediate, protoaustinoid A. The short chain dehydrogenase prhI then oxidizes the C-3 alcohol group of the terpene cyclase product to transform protoaustinoid A into protoaustinoid B. The FAD-binding monooxygenase prhJ catalyzes the oxidation of protoaustinoid B into preaustinoid A which is further oxidized into preaustinoid A1 by FAD-binding monooxygenase phrK. Finally, prhA leads to berkeleydione via the berkeleyone B intermediate. PrhA is a multifunctional dioxygenase that first desaturates at C5-C6 to form berkeleyone B, followed by rearrangement of the A/B-ring to form the cycloheptadiene moiety in berkeleydione. Berkeleydione serves as the key intermediate for the biosynthesis of paraherquonin as well as many other meroterpenoids. The cytochrome P450 monooxygenases prhB, prhD, and prhN, as well as the isomerase prhC, are probably involved in the late stage of paraherquonin biosynthesis, after the production of berkeleydione. Especially prhC might be a multifunctional enzyme that catalyzes the D-ring expansion via intramolecular methoxy rearrangement, as well as the hydrolysis of the expanded D-ring. This Penicillium brasilianum protein is FAD-binding monooxygenase prhK.